We begin with the raw amino-acid sequence, 357 residues long: Probable glutamine amidotransferase DUG3 (357 aa).

The For GATase activity role is filled by cysteine 2. A Glutamine amidotransferase type-2 domain is found at 2–260; that stretch reads CRFLIFKGKQ…PGEYRVERLD (259 aa).

Belongs to the DUG3 family. In terms of assembly, component of the GSH degradosomal complex composed of at least DUG1, DUG2 and DUG3.

The protein localises to the cytoplasm. Component of the GSH degradosomal complex involved in the degradation of glutathione (GSH) and other peptides containing a gamma-glu-X bond. The sequence is that of Probable glutamine amidotransferase DUG3 (DUG3) from Saccharomyces cerevisiae (strain ATCC 204508 / S288c) (Baker's yeast).